The following is an 84-amino-acid chain: U7-ctenitoxin-Pn1a (84 aa).

The N-terminal stretch at 1 to 17 (MKLCILLVVLLITVVRA) is a signal peptide. The propeptide occupies 18-38 (EEDILENEAEDISPAIKERSA). 4 cysteine pairs are disulfide-bonded: Cys-41-Cys-56, Cys-48-Cys-61, Cys-55-Cys-78, and Cys-63-Cys-76.

In terms of tissue distribution, expressed by the venom gland.

The protein resides in the secreted. Its function is as follows. Antagonist of L-type calcium channels (Cav1/CACNA1). Causes paralysis in the posterior limbs and gradual decreases in movement and aggression during 24 hours at dose levels of 5 ug per mouse. The sequence is that of U7-ctenitoxin-Pn1a from Phoneutria nigriventer (Brazilian armed spider).